Consider the following 269-residue polypeptide: Tungstate-binding protein TupA (269 aa).

The N-terminal stretch at 1–17 (MKKIISLALALALSASA) is a signal peptide.

As to quaternary structure, the complex is composed of two ATP-binding proteins (TupC), two transmembrane proteins (TupB) and a solute-binding protein (TupA).

It localises to the periplasm. Its function is as follows. Part of an ABC transporter complex involved in ultra-high affinity tungstate uptake. Specifically binds tungstate. In Campylobacter jejuni subsp. jejuni serotype O:2 (strain ATCC 700819 / NCTC 11168), this protein is Tungstate-binding protein TupA.